Reading from the N-terminus, the 156-residue chain is Cell division protein SepF (156 aa).

Positions 23 to 36 are enriched in basic and acidic residues; it reads SYEKEQTDMKKQQD. Positions 23–50 are disordered; the sequence is SYEKEQTDMKKQQDPPEQQDVTFPKAQP.

The protein belongs to the SepF family. In terms of assembly, homodimer. Interacts with FtsZ.

The protein localises to the cytoplasm. In terms of biological role, cell division protein that is part of the divisome complex and is recruited early to the Z-ring. Probably stimulates Z-ring formation, perhaps through the cross-linking of FtsZ protofilaments. Its function overlaps with FtsA. The polypeptide is Cell division protein SepF (Bacillus thuringiensis (strain Al Hakam)).